Here is a 796-residue protein sequence, read N- to C-terminus: Serine/threonine-protein kinase ATG1 (796 aa).

The Protein kinase domain occupies 9–304 (YVVGAEIGRG…FQEFFNDPVI (296 aa)). ATP contacts are provided by residues 15-23 (IGRGSFANV) and Lys38. Residue Asp155 is the Proton acceptor of the active site. Over residues 360–370 (LEEEDEEEDQD) the composition is skewed to acidic residues. Disordered stretches follow at residues 360–382 (LEEE…IQHM), 389–408 (LLNK…RREL), and 450–480 (PYTR…KVPI). The span at 389 to 403 (LLNKTTQKQTEVQSQ) shows a compositional bias: polar residues. The segment covering 453-470 (RRYSSSSRSSSTGSNQRR) has biased composition (low complexity).

Belongs to the protein kinase superfamily. Ser/Thr protein kinase family. APG1/unc-51/ULK1 subfamily. Homodimer. Forms a ternary complex with ATG13 and ATG17.

It localises to the cytoplasm. Its subcellular location is the preautophagosomal structure membrane. It catalyses the reaction L-seryl-[protein] + ATP = O-phospho-L-seryl-[protein] + ADP + H(+). It carries out the reaction L-threonyl-[protein] + ATP = O-phospho-L-threonyl-[protein] + ADP + H(+). In terms of biological role, serine/threonine protein kinase involved in the cytoplasm to vacuole transport (Cvt) and found to be essential in autophagy, where it is required for the formation of autophagosomes. Involved in the clearance of protein aggregates which cannot be efficiently cleared by the proteasome. Required for selective autophagic degradation of the nucleus (nucleophagy) as well as for mitophagy which contributes to regulate mitochondrial quantity and quality by eliminating the mitochondria to a basal level to fulfill cellular energy requirements and preventing excess ROS production. Also involved in endoplasmic reticulum-specific autophagic process, in selective removal of ER-associated degradation (ERAD) substrates. Plays a key role in ATG9 and ATG23 cycling through the pre-autophagosomal structure and is necessary to promote ATG18 binding to ATG9 through phosphorylation of ATG9. Catalyzes phosphorylation of ATG4, decreasing the interaction between ATG4 and ATG8 and impairing deconjugation of PE-conjugated forms of ATG8. In Komagataella pastoris (Yeast), this protein is Serine/threonine-protein kinase ATG1.